We begin with the raw amino-acid sequence, 364 residues long: Ribosomal RNA large subunit methyltransferase M (364 aa).

Residues Ser194, 227-230 (CPGG), Asp246, Asp266, and Asp284 each bind S-adenosyl-L-methionine. Lys313 acts as the Proton acceptor in catalysis.

It belongs to the class I-like SAM-binding methyltransferase superfamily. RNA methyltransferase RlmE family. RlmM subfamily. In terms of assembly, monomer.

The protein localises to the cytoplasm. The catalysed reaction is cytidine(2498) in 23S rRNA + S-adenosyl-L-methionine = 2'-O-methylcytidine(2498) in 23S rRNA + S-adenosyl-L-homocysteine + H(+). Functionally, catalyzes the 2'-O-methylation at nucleotide C2498 in 23S rRNA. The polypeptide is Ribosomal RNA large subunit methyltransferase M (Actinobacillus succinogenes (strain ATCC 55618 / DSM 22257 / CCUG 43843 / 130Z)).